A 248-amino-acid polypeptide reads, in one-letter code: PF03932 family protein CutC (248 aa).

Belongs to the CutC family. Homodimer.

Its subcellular location is the cytoplasm. This is PF03932 family protein CutC from Escherichia coli (strain 55989 / EAEC).